We begin with the raw amino-acid sequence, 1642 residues long: Cortactin-binding protein 2 (1642 aa).

5 disordered regions span residues 1-27 (MATD…AEAA), 203-222 (KKKT…RSTE), 366-433 (IGAS…HPGL), 446-471 (GSNA…SPTS), and 491-611 (RFTS…PSID). Positions 119–276 (RKMQERMSTQ…EQLKRGTDSK (158 aa)) form a coiled coil. Residues 385–394 (GPSTGSTADL) show a composition bias toward polar residues. A compositionally biased stretch (low complexity) spans 395–407 (TSSPTPVPSTVSP). Arginine 491 is modified (asymmetric dimethylarginine). Positions 497-506 (AGAPPRPGAP) are enriched in pro residues. Residues 576–586 (TVASPPSTLPQ) show a composition bias toward polar residues. ANK repeat units follow at residues 702–732 (GRPT…DINY), 736–765 (DGHS…QVNA), 769–798 (NGFT…NINH), 802–831 (GGQT…DRSV), 835–864 (DGWT…PAHG), and 904–934 (EGWT…EPER). Positions 1441–1469 (SGAWRKVSTSPRKKSGRFSSPTWNKPDLS) are disordered. Serine 1513 is subject to Phosphoserine. The disordered stretch occupies residues 1545–1642 (LRRFDSSGNN…NSRDLEPTQK (98 aa)). Polar residues-rich tracts occupy residues 1552–1563 (GNNPVFSATVNN) and 1571–1588 (KEVS…SNSK). Low complexity predominate over residues 1613–1627 (SQNTKRSSSSSNTRQ).

Interacts with CTTN/cortactin SH3 domain. Interacts with STRN, STRN4/zinedin and MOB4/phocein; this interactions mediate the association with the STRIPAK core complex and may regulate dendritic spine distribution of the STRIPAK complex in hippocampal neurons. Activation of glutamate receptors weakens the interaction with STRN and STRN4.

It localises to the cytoplasm. The protein resides in the cell cortex. Its subcellular location is the cell projection. It is found in the dendritic spine. Functionally, regulates the dendritic spine distribution of CTTN/cortactin in hippocampal neurons, and thus controls dendritic spinogenesis and dendritic spine maintenance. Associates with the striatin-interacting phosphatase and kinase (STRIPAK) core complex to regulate dendritic spine distribution of the STRIPAK complex in hippocampal neurons. The sequence is that of Cortactin-binding protein 2 (CTTNBP2) from Muntiacus muntjak (Barking deer).